The following is a 189-amino-acid chain: MSPKERIIMGVDPGTILMGYGMLHVVGNTPRLMAMGVIRLEKFDNHYIRLKRIFDRITGLIDEFLPDEMAIEAPFFGKNVQSMLKLGRAQGVAMAAALARDIPITEYAPMRIKQAITGNGNASKEQVAGMLQRYLRIPDEQMLPEMDATDGLAAAVCHFFQTSGPMARSGGSAVKNWKDFVNRNPDKVR.

Active-site residues include Asp-12, Glu-72, and Asp-147. Mg(2+) is bound by residues Asp-12, Glu-72, and Asp-147.

It belongs to the RuvC family. In terms of assembly, homodimer which binds Holliday junction (HJ) DNA. The HJ becomes 2-fold symmetrical on binding to RuvC with unstacked arms; it has a different conformation from HJ DNA in complex with RuvA. In the full resolvosome a probable DNA-RuvA(4)-RuvB(12)-RuvC(2) complex forms which resolves the HJ. The cofactor is Mg(2+).

The protein localises to the cytoplasm. It carries out the reaction Endonucleolytic cleavage at a junction such as a reciprocal single-stranded crossover between two homologous DNA duplexes (Holliday junction).. The RuvA-RuvB-RuvC complex processes Holliday junction (HJ) DNA during genetic recombination and DNA repair. Endonuclease that resolves HJ intermediates. Cleaves cruciform DNA by making single-stranded nicks across the HJ at symmetrical positions within the homologous arms, yielding a 5'-phosphate and a 3'-hydroxyl group; requires a central core of homology in the junction. The consensus cleavage sequence is 5'-(A/T)TT(C/G)-3'. Cleavage occurs on the 3'-side of the TT dinucleotide at the point of strand exchange. HJ branch migration catalyzed by RuvA-RuvB allows RuvC to scan DNA until it finds its consensus sequence, where it cleaves and resolves the cruciform DNA. The protein is Crossover junction endodeoxyribonuclease RuvC of Porphyromonas gingivalis (strain ATCC BAA-308 / W83).